Here is a 161-residue protein sequence, read N- to C-terminus: Protein-export protein SecB (161 aa).

Belongs to the SecB family. As to quaternary structure, homotetramer, a dimer of dimers. One homotetramer interacts with 1 SecA dimer.

It localises to the cytoplasm. One of the proteins required for the normal export of preproteins out of the cell cytoplasm. It is a molecular chaperone that binds to a subset of precursor proteins, maintaining them in a translocation-competent state. It also specifically binds to its receptor SecA. The protein is Protein-export protein SecB of Pseudomonas putida (strain ATCC 700007 / DSM 6899 / JCM 31910 / BCRC 17059 / LMG 24140 / F1).